The primary structure comprises 188 residues: Adenylate kinase (188 aa).

Residue 11–16 (GAGKGT) coordinates ATP. The tract at residues 31–60 (STGDIFRANIKDQTELGREAQRYTDAGNLV) is NMP. AMP is bound by residues threonine 32, arginine 37, 58 to 60 (NLV), 86 to 89 (GYPR), and glutamine 93. The tract at residues 127-137 (GRAQEQGRTDD) is LID. Arginine 128 provides a ligand contact to ATP. AMP is bound by residues arginine 134 and arginine 145. An ATP-binding site is contributed by glycine 173.

It belongs to the adenylate kinase family. Monomer.

The protein resides in the cytoplasm. The enzyme catalyses AMP + ATP = 2 ADP. It participates in purine metabolism; AMP biosynthesis via salvage pathway; AMP from ADP: step 1/1. Catalyzes the reversible transfer of the terminal phosphate group between ATP and AMP. Plays an important role in cellular energy homeostasis and in adenine nucleotide metabolism. The polypeptide is Adenylate kinase (Kocuria rhizophila (strain ATCC 9341 / DSM 348 / NBRC 103217 / DC2201)).